The following is a 310-amino-acid chain: Protein FAM153A (310 aa).

4 disordered regions span residues 39–58 (LGVP…LCPP), 108–136 (QTNG…HTME), 156–184 (SYNG…DLEE), and 250–297 (TITG…KKSR). A compositionally biased stretch (low complexity) spans 259 to 268 (SASPSSAPAE). The segment covering 270-282 (ATEKTKVEEEVKT) has biased composition (basic and acidic residues). Residues 283–297 (RKPKKKTRKPSKKSR) are compositionally biased toward basic residues.

This sequence belongs to the FAM153 family.

The chain is Protein FAM153A (FAM153A) from Homo sapiens (Human).